Here is a 70-residue protein sequence, read N- to C-terminus: Kappa-scoloptoxin(07)-Ssm2b (70 aa).

The first 19 residues, 1–19, serve as a signal peptide directing secretion; that stretch reads MLVFYALLFVSVFSSTVMG. A propeptide spanning residues 20–39 is cleaved from the precursor; sequence ATIDKPILREAIEEIDVNKR.

It belongs to the scoloptoxin-07 family. Contains 3 disulfide bonds. In terms of tissue distribution, expressed by the venom gland.

It localises to the secreted. Functionally, inhibits voltage-gated potassium channels. The sequence is that of Kappa-scoloptoxin(07)-Ssm2b from Scolopendra mutilans (Chinese red-headed centipede).